We begin with the raw amino-acid sequence, 604 residues long: Elongation factor 4 1 (604 aa).

The region spanning 10–191 (EHIRNFCIIA…AIVDSVPAPT (182 aa)) is the tr-type G domain. Residues 22–27 (DHGKST) and 138–141 (NKID) contribute to the GTP site.

Belongs to the TRAFAC class translation factor GTPase superfamily. Classic translation factor GTPase family. LepA subfamily.

The protein resides in the cell inner membrane. The catalysed reaction is GTP + H2O = GDP + phosphate + H(+). Required for accurate and efficient protein synthesis under certain stress conditions. May act as a fidelity factor of the translation reaction, by catalyzing a one-codon backward translocation of tRNAs on improperly translocated ribosomes. Back-translocation proceeds from a post-translocation (POST) complex to a pre-translocation (PRE) complex, thus giving elongation factor G a second chance to translocate the tRNAs correctly. Binds to ribosomes in a GTP-dependent manner. The chain is Elongation factor 4 1 from Rhodopirellula baltica (strain DSM 10527 / NCIMB 13988 / SH1).